A 137-amino-acid chain; its full sequence is Small ribosomal subunit protein uS12 (137 aa).

Residues 1–57 (MPTINQLVRKPRKSKVEKSKSPALNVGYNSRKKVQTNVSSPQKRGVATRVGTMTPKK) are disordered. At aspartate 102 the chain carries 3-methylthioaspartic acid.

This sequence belongs to the universal ribosomal protein uS12 family. In terms of assembly, part of the 30S ribosomal subunit. Contacts proteins S8 and S17. May interact with IF1 in the 30S initiation complex.

Its function is as follows. With S4 and S5 plays an important role in translational accuracy. Functionally, interacts with and stabilizes bases of the 16S rRNA that are involved in tRNA selection in the A site and with the mRNA backbone. Located at the interface of the 30S and 50S subunits, it traverses the body of the 30S subunit contacting proteins on the other side and probably holding the rRNA structure together. The combined cluster of proteins S8, S12 and S17 appears to hold together the shoulder and platform of the 30S subunit. This Streptococcus suis (strain 98HAH33) protein is Small ribosomal subunit protein uS12.